The chain runs to 469 residues: ATP synthase subunit beta (469 aa).

Residue Gly157–Thr164 participates in ATP binding.

The protein belongs to the ATPase alpha/beta chains family. In terms of assembly, F-type ATPases have 2 components, CF(1) - the catalytic core - and CF(0) - the membrane proton channel. CF(1) has five subunits: alpha(3), beta(3), gamma(1), delta(1), epsilon(1). CF(0) has three main subunits: a(1), b(2) and c(9-12). The alpha and beta chains form an alternating ring which encloses part of the gamma chain. CF(1) is attached to CF(0) by a central stalk formed by the gamma and epsilon chains, while a peripheral stalk is formed by the delta and b chains.

It is found in the cell membrane. It carries out the reaction ATP + H2O + 4 H(+)(in) = ADP + phosphate + 5 H(+)(out). Functionally, produces ATP from ADP in the presence of a proton gradient across the membrane. The catalytic sites are hosted primarily by the beta subunits. This is ATP synthase subunit beta from Brevibacillus brevis (strain 47 / JCM 6285 / NBRC 100599).